Consider the following 281-residue polypeptide: Energy-coupling factor transporter ATP-binding protein EcfA2 (281 aa).

Residues 3 to 242 (IKVTGLTYVY…TETLEEIGLA (240 aa)) form the ABC transporter domain. 40-47 (GHTGSGKS) serves as a coordination point for ATP.

It belongs to the ABC transporter superfamily. Energy-coupling factor EcfA family. Forms a stable energy-coupling factor (ECF) transporter complex composed of 2 membrane-embedded substrate-binding proteins (S component), 2 ATP-binding proteins (A component) and 2 transmembrane proteins (T component).

It localises to the cell membrane. ATP-binding (A) component of a common energy-coupling factor (ECF) ABC-transporter complex. Unlike classic ABC transporters this ECF transporter provides the energy necessary to transport a number of different substrates. This Acetivibrio thermocellus (strain ATCC 27405 / DSM 1237 / JCM 9322 / NBRC 103400 / NCIMB 10682 / NRRL B-4536 / VPI 7372) (Clostridium thermocellum) protein is Energy-coupling factor transporter ATP-binding protein EcfA2.